Reading from the N-terminus, the 18562-residue chain is Titin homolog (18562 aa).

Residues 90–176 (PKFIQVIKAY…GVSTSYGYIT (87 aa)) enclose the Ig-like 1 domain. A disordered region spans residues 384–404 (RFHPQPPKPPRAGTSRRFLPE). 4 consecutive Ig-like domains span residues 406 to 493 (PKFV…TQVT), 821 to 913 (PKIV…AFIN), 943 to 1038 (PKFI…LTIS), and 1135 to 1225 (PRFE…LTVD). Cys-842 and Cys-897 are oxidised to a cystine. Positions 1336 to 1360 (LPPVQKSMSVQEEKASSQRTPSPMN) are disordered. The Ig-like 6 domain maps to 1679-1762 (PKFLRKLVNC…ASNVAGTTFS (84 aa)). Cysteines 1700 and 1751 form a disulfide. Coiled-coil stretches lie at residues 1766–1786 (LKLS…SEIK), 2011–2038 (QSLD…ERTS), and 2065–2085 (ISDQ…ALQE). The interval 2155-2177 (RKGSDKDKRKATRIKRVPSAHSA) is disordered. Residues 2163–2172 (RKATRIKRVP) are compositionally biased toward basic residues. Residues 2205–2231 (LKQNEEAKEIQELFVKIEKEINTIAEL) adopt a coiled-coil conformation. Disordered stretches follow at residues 2298–2459 (IIGI…TADA) and 2614–2637 (KSSL…EVTA). Residues 2309–2323 (RRPSSTPRGSTRSSN) are compositionally biased toward low complexity. Positions 2324 to 2341 (LTTSQDSQATTKMTVSSE) are enriched in polar residues. Residues 2606–2630 (LMQTLASEKSSLKAAEEDEKEGEEE) are a coiled coil. Residues 2621 to 2636 (EEDEKEGEEEGEEEVT) show a composition bias toward acidic residues. Ig-like domains follow at residues 3095–3177 (KEVM…SGLY) and 3179–3264 (TERS…SFVS). Residues 3362–3692 (EVPKVAEPSE…NAEAQKVVDS (331 aa)) are disordered. Positions 3655 to 3665 (SEEETPLEETN) are enriched in acidic residues. Ig-like domains lie at 3789 to 3878 (PVFT…CEIV), 3897 to 3985 (PHFV…CTID), and 4038 to 4125 (PPYF…CVLT). Disulfide bonds link Cys-3919/Cys-3969 and Cys-4059/Cys-4109. 14 disordered regions span residues 4553–4599 (QSRE…SAPT), 4634–4699 (TVEP…EIVE), 4750–4814 (GSTA…TSEV), 4826–4855 (PVPE…EVQP), 4912–4931 (STAA…VESK), 4950–4969 (PETS…PVES), 4989–5216 (PETS…EILE), 5267–5294 (GSTA…EVEP), 5306–5325 (PETS…SVES), 5345–5372 (PETS…EVEP), 5428–6101 (GSTA…VEPT), 6127–6157 (VQVP…EVQP), 6214–6900 (STAA…ETSE), and 6930–8453 (APVE…DDKL). Positions 4555–4577 (RELDNTERNFTVNKEKDESKKPS) are enriched in basic and acidic residues. PVET repeat units lie at residues 4599–4626 (TVEK…KDVP), 4627–4665 (VPET…KDVP), 4666–4704 (VPET…KDVT), 4755–4787 (PAQE…KDVP), 4788–4826 (VPET…KDVP), 4827–4865 (VPET…KDVT), 4917–4948 (AQEP…KDVP), 4949–4987 (VPET…KDVP), 4988–5026 (VPET…KDVP), 5027–5065 (VPET…KDVP), 5066–5104 (VPET…KDVP), 5105–5143 (VPET…KDVP), 5144–5182 (VPET…KVVP), 5183–5221 (VPET…KDVT), 5273–5304 (AQEP…KDVP), 5305–5343 (VPET…KDVP), 5344–5382 (VPET…KDVT), 5434–5465 (AQEP…KDVP), 5466–5504 (VPET…KDVP), 5505–5543 (VPET…KVVP), 5544–5582 (VPET…KDVP), 5583–5621 (VPET…KDVP), 5622–5660 (VPET…KDVS), 5661–5699 (VPET…KDVS), 5700–5738 (VPET…KDVP), 5739–5777 (VPET…KDVQ), 5778–5816 (VPET…KDVP), 5817–5855 (VPET…KDVP), 5856–5894 (VPET…KDVS), 5895–5933 (VPET…KDVP), 5934–5972 (VPET…KDVQ), 5973–6011 (VPET…KDVP), 6012–6050 (VPET…KDVQ), 6051–6089 (VPET…KDVS), 6090–6128 (VPET…KDVQ), 6129–6167 (VPET…KDVT), 6219–6250 (AHEP…KDVP), 6251–6289 (VPET…KDLP), 6290–6328 (VPET…KDVP), 6329–6367 (VPET…KDVP), 6368–6406 (VPET…KDVP), 6407–6445 (VPET…KDVS), 6446–6484 (VPET…KDVS), 6485–6523 (VPET…KDVP), 6524–6562 (VPET…KDVQ), 6563–6601 (VPET…KDVP), 6602–6640 (VPET…KDVP), 6641–6679 (VPET…KDVQ), 6680–6718 (VPET…KDVP), 6719–6757 (VPET…KDVA), 6758–6796 (VPET…KDVP), 6797–6835 (VPET…KDVP), 6836–6874 (VPET…KDVP), 6875–6913 (VPET…KDVP), 6914–6952 (VPEA…KDVP), and 6953–6991 (VPEA…KLKK). Composition is skewed to basic and acidic residues over residues 4638–4651 (TVEK…KETS) and 4677–4691 (TVEK…EKSE). The segment covering 4960–4969 (TVEKLKPVES) has biased composition (basic and acidic residues). The span at 5038 to 5051 (TVEKLKPVESKETS) shows a compositional bias: basic and acidic residues. Composition is skewed to basic and acidic residues over residues 5116–5129 (TVEK…KETS) and 5155–5168 (TVEK…KETS). Residues 5212-5235 (AEILEQKDVTCEEEIKELLTEVEV) are a coiled coil. The segment covering 5316–5325 (TVEKLKSVES) has biased composition (basic and acidic residues). Composition is skewed to basic and acidic residues over residues 5477–5490 (TVEK…KETS) and 5516–5529 (TVEK…KETS). 6 stretches are compositionally biased toward basic and acidic residues: residues 6690–6704 (PTKE…KETS), 6729–6743 (PTKE…KETS), 6768–6782 (PTKE…KETS), 6807–6821 (PTKE…KETS), 6846–6860 (PTKE…KETS), and 6885–6899 (PTKE…KETS). 4 stretches are compositionally biased toward basic and acidic residues: residues 6972–7606 (ESKE…DNFK), 7613–7630 (LQKE…DNFK), 7637–8062 (LQKE…DNFK), and 8069–8453 (LQKE…DDKL). Residues 6984-7812 (QADAKLKKEK…DKLKQETDAK (829 aa)) adopt a coiled-coil conformation. BLUE repeat units lie at residues 6992 to 6996 (EKDDK), 6997 to 7012 (HKQE…NDDK), 7013 to 7028 (LKQE…NDDK), 7029 to 7044 (LKQE…NDDK), 7045 to 7060 (LKQE…NDDK), 7061 to 7076 (LKQE…NDDK), 7077 to 7092 (LKQE…NDDK), 7093 to 7108 (LKQE…NDDK), 7109 to 7124 (LKQE…NDDK), 7125 to 7140 (LKQE…NDDK), 7141 to 7156 (LKQE…NDDK), 7157 to 7172 (LKQE…NDDK), 7173 to 7188 (LKQE…NDDK), 7189 to 7204 (LKQE…KHDK), 7205 to 7220 (LKQE…NDDK), 7221 to 7236 (LKQE…NDDK), 7237 to 7252 (LKQE…KDDK), 7253 to 7268 (LKQE…KDDK), 7269 to 7284 (LKQD…KDDK), 7285 to 7300 (LKQE…KDDK), 7301 to 7316 (LKHE…KDDK), 7317 to 7332 (LKQE…KDDR), 7333 to 7348 (LKKD…KDDK), 7349 to 7364 (LKQE…KDDK), 7365 to 7380 (LKHE…KDDK), 7381 to 7396 (LKQE…KDDK), 7397 to 7412 (LKQE…KDDK), 7413 to 7428 (LKQE…KDDK), 7429 to 7444 (LKQE…KDDK), 7445 to 7460 (LKQE…KDDK), 7461 to 7476 (LKQE…KDDK), 7477 to 7492 (LKQE…KDDK), 7493 to 7508 (LKQE…KDDK), 7509 to 7524 (LKQD…KDDK), 7525 to 7540 (LKQE…KDDK), 7541 to 7556 (LKHE…KDDK), 7557 to 7572 (LKQE…KDDK), 7573 to 7588 (LKQD…KDDK), 7589 to 7604 (LKHE…KDDN), 7605 to 7620 (FKQE…KDDK), 7621 to 7628 (LKQEKDDN), 7629 to 7644 (FKQE…KDDK), 7645 to 7652 (LKQEKDDK), 7653 to 7668 (LKQE…KDDK), 7669 to 7684 (LKQE…KDDK), 7685 to 7700 (LKQE…KDDK), 7701 to 7716 (LKQE…KDDK), 7717 to 7732 (LKQE…KDDK), 7733 to 7748 (LKQE…KDDK), 7749 to 7764 (LKQE…KDDK), 7765 to 7772 (LKQEKNDK), 7773 to 7788 (LKQE…KDDK), 7789 to 7804 (LKQE…KDDK), 7805 to 7820 (LKQE…KDDK), 7821 to 7836 (LKQE…KDDK), 7837 to 7852 (LKQE…KDDK), 7853 to 7868 (LKQE…KDNK), 7869 to 7884 (LKQE…KDNK), 7885 to 7900 (LKQE…KDDK), 7901 to 7916 (LKQE…KDDK), 7917 to 7932 (LKQE…KDDK), 7933 to 7948 (LKQE…KDDK), 7949 to 7964 (LKQE…KDDK), 7965 to 7980 (LKQE…KDDK), 7981 to 7996 (LKQE…KDDK), 7997 to 8012 (LKQE…KDDK), 8013 to 8028 (LKQE…KDDK), 8029 to 8044 (LKQE…KDDK), 8045 to 8060 (LKQE…KDDN), 8061 to 8076 (FKQE…KDDK), 8077 to 8084 (LKQEKDDK), 8085 to 8100 (LKQE…KDDK), 8101 to 8116 (LKQE…KDDK), 8117 to 8132 (LKQE…KDDK), 8133 to 8148 (LKQE…KDDK), 8149 to 8164 (LKQE…KDDK), 8165 to 8180 (LKQE…KDDK), 8181 to 8196 (LKQE…KDDK), 8197 to 8212 (LKQE…KDDK), 8213 to 8228 (LKQE…KDDK), 8229 to 8244 (LKQE…KDDK), 8245 to 8260 (LKQE…KDDK), 8261 to 8276 (LKQE…KDDK), 8277 to 8292 (LKQE…KDDK), 8293 to 8308 (LKQE…KDNK), 8309 to 8324 (LKQE…KDNK), 8325 to 8340 (LKQE…KDDK), 8341 to 8356 (LKQE…KDDK), 8357 to 8371 (LKQE…EKDD), 8373 to 8388 (LKQE…KDDK), 8389 to 8404 (LKQE…KDDK), 8405 to 8420 (LKQE…KDDK), 8421 to 8436 (LKQE…KDDK), 8437 to 8452 (LKQE…KDDK), 8453 to 8468 (LKQE…KDDK), and 8469 to 8484 (LKQE…KGDK). The stretch at 7876 to 8273 (KLKKEKDNKL…EADAKLKKDK (398 aa)) forms a coiled coil. The stretch at 8316-8490 (KLKKEKDNKL…KGDKLKLEDQ (175 aa)) forms a coiled coil. Over residues 8599–8611 (KHLKKKKKHHKKE) the composition is skewed to basic residues. The segment at 8599 to 8626 (KHLKKKKKHHKKEKIAVKETEQDEKTVS) is disordered. A compositionally biased stretch (basic and acidic residues) spans 8612-8626 (KIAVKETEQDEKTVS). Residues 8950–9041 (KPRKAQLVAL…EIIEVNTLDY (92 aa)) form the Fibronectin type-III 1 domain. Disordered stretches follow at residues 9079 to 9104 (IEEH…LDSE), 9147 to 9436 (VQKI…AAAE), 9481 to 9609 (EEQS…ETES), 9702 to 10224 (ADAV…ESRI), 10239 to 10274 (ESDD…EDSP), 10539 to 11018 (QSAP…DSFT), 11030 to 11111 (EDAV…QKDQ), 11123 to 11213 (KKLA…QDKT), 11225 to 11387 (AKTT…SLTS), 11420 to 11592 (KGLN…NPEL), 11624 to 11825 (LTKK…SDNL), 11872 to 11955 (LSAH…TSLS), 11996 to 12054 (TNLI…LQKN), 12397 to 12418 (GRRV…RKKR), 12537 to 12974 (EESR…PAES), 13026 to 13045 (EAAK…TEVV), 13065 to 13261 (AAEA…LNDK), 13283 to 13514 (QAQA…EQLK), 13553 to 13574 (EEKQ…KLKL), and 13594 to 13874 (EKLA…RRTG). Residues 9084-9093 (KLKKKSKKSK) show a composition bias toward basic residues. Composition is skewed to basic and acidic residues over residues 9172–9184 (VKKD…KKSL) and 9191–9202 (TKKEIQGKPEKK). Residues 9213–9231 (SSISETSETLTKDLTQTKQ) are compositionally biased toward polar residues. Residues 9232 to 9267 (SEPEPAKRTTETSVQDEVKRKTETTSKSKQTTEEHP) are compositionally biased toward basic and acidic residues. A compositionally biased stretch (low complexity) spans 9273–9283 (SDSSISSTSDA). Basic and acidic residues predominate over residues 9295–9332 (EAQKVTEKPETAKLESKSKMTEDTTKESDNKETVDEKP). Residues 9346-9359 (STISETSETSAVES) show a composition bias toward low complexity. Residues 9371–9510 (AAVDKEKKQK…QTKAKAAEKQ (140 aa)) are a coiled coil. Composition is skewed to basic and acidic residues over residues 9373–9436 (VDKE…AAAE) and 9481–9521 (EEQS…KSNK). The segment covering 9547–9558 (SSISQKSDTSKT) has biased composition (low complexity). The stretch at 9577-9749 (TSKQKETDKK…QTVEEQAKLD (173 aa)) forms a coiled coil. Composition is skewed to basic and acidic residues over residues 9578 to 9609 (SKQK…ETES) and 9702 to 9783 (ADAV…DEKP). Residues 9798–9809 (SISQKSVTSKTV) show a composition bias toward polar residues. Composition is skewed to basic and acidic residues over residues 9819 to 10004 (ETQK…DEKP), 10040 to 10149 (ETQK…KSEN), and 10162 to 10196 (VKSE…EPKE). Coiled-coil stretches lie at residues 9822–9995 (KVAD…TEEA) and 10046–10129 (EADK…TSKK). Basic residues predominate over residues 10197–10206 (KKKIIKKKKD). Basic and acidic residues predominate over residues 10207–10224 (TTKPQEASKELSSDESRI). Positions 10239-10250 (ESDDLSTASTIK) are enriched in polar residues. Residues 10461–10553 (KPTSLQVTST…DTIEATTQAE (93 aa)) enclose the Fibronectin type-III 2 domain. Residues 10566-10609 (EKVKEPVSKKPENTKESEGHKKRDRKESEDHDENNLGKSGKDEF) are compositionally biased toward basic and acidic residues. Residues 10612-10637 (SGESGTSNQNEESAQLNTSFTSTEQH) show a composition bias toward polar residues. Acidic residues predominate over residues 10663 to 10680 (IDADVVEVEYDEQGDDIP). Basic and acidic residues predominate over residues 10707 to 10716 (MAEKDSDAME). Positions 10779 to 10790 (ADQTGMSIQDLN) are enriched in polar residues. Basic and acidic residues-rich tracts occupy residues 10840-10852 (QLDK…DDKM) and 10863-10884 (KKPE…KESD). Polar residues predominate over residues 10961 to 10975 (LSTSEQVENASQNLG). Basic and acidic residues-rich tracts occupy residues 10999–11009 (IHGEAESKLGE), 11045–11055 (SAEKTSLEVRD), and 11076–11089 (SNRD…RDLN). The stretch at 11018-11064 (TLQDLYEELKAKEDAVEAGAETSNADQSAEKTSLEVRDMKKKMKKKQ) forms a coiled coil. Residues 11090 to 11108 (TQHSNQTGEDESSTFNFGQ) are compositionally biased toward polar residues. Positions 11159 to 11173 (KKGEENEKTKFEAKH) are enriched in basic and acidic residues. Positions 11174–11187 (LGSSSASDSLAEST) are enriched in low complexity. 3 stretches are compositionally biased toward basic and acidic residues: residues 11195-11211 (KGEV…KNQD), 11271-11280 (IPDKNRDSDK), and 11295-11318 (ESAE…EKTL). Residues 11374 to 11387 (SKVTTSFADESLTS) show a composition bias toward polar residues. 2 stretches are compositionally biased toward basic and acidic residues: residues 11440–11464 (KVKD…KDQK) and 11472–11485 (GSKD…EEKT). Residues 11503–11515 (MTDQKNVQESQYA) are compositionally biased toward polar residues. Basic and acidic residues-rich tracts occupy residues 11624–11635 (LTKKQDENDAKK), 11645–11669 (AKKD…DSRE), and 11722–11735 (VSEK…EKTV). The segment covering 11754-11767 (ESLNASSALSTTDV) has biased composition (polar residues). Residues 11916–11937 (AEDKYVESRKKTTLKKKPEQKQ) show a composition bias toward basic and acidic residues. The stretch at 12408 to 12428 (ELDDAKKRKKRRIKRVVERRN) forms a coiled coil. An Ig-like 12 domain is found at 12432 to 12547 (PRLTQLIPPR…ESRDDDKSVD (116 aa)). 3 stretches are compositionally biased toward basic and acidic residues: residues 12537 to 12547 (EESRDDDKSVD), 12555 to 12567 (LEEK…DKSK), and 12609 to 12689 (VGAK…KKDA). Residues 12690–12701 (SQPSSSKESSPP) show a composition bias toward low complexity. The span at 12729-12740 (TMHSETNITTTI) shows a compositional bias: polar residues. Basic and acidic residues-rich tracts occupy residues 12766–12839 (ESAK…KNKS), 12852–12865 (ETKK…EVPK), and 12889–12940 (PADD…DDKS). Residues 12797 to 12828 (KKSEKKDEVTAEKQSTEALIESKKKEVDESKI) are a coiled coil. Residues 12980–13103 (AEVNKAKKQK…LKLEEESAAK (124 aa)) are a coiled coil. Basic and acidic residues-rich tracts occupy residues 13065 to 13124 (AAEA…KAGE), 13133 to 13145 (PTSK…KDVG), 13176 to 13191 (TDSE…DEPT), 13203 to 13261 (EADK…LNDK), 13283 to 13327 (QAQA…EKQA), 13337 to 13354 (AVKK…EANK), and 13361 to 13416 (LKIE…DEKP). Residues 13237–13380 (LDAQEKIKKV…SKQTVEEQAK (144 aa)) adopt a coiled-coil conformation. Residues 13431-13442 (SISQKSETSKTV) are compositionally biased toward polar residues. A compositionally biased stretch (basic and acidic residues) spans 13452–13514 (ETQKVADAAR…KQKEKDEQLK (63 aa)). Residues 13455-13628 (KVADAARKQK…ETKSKQTEEA (174 aa)) are a coiled coil. Basic and acidic residues predominate over residues 13594–13637 (EKLAQEQSRLEDEAKKSAEKQKLESETKSKQTEEAPKESVDEKP). Over residues 13651-13662 (SSISQKSKSAKS) the composition is skewed to low complexity. Residues 13684–13696 (KVEQSPDESTSAT) are compositionally biased toward polar residues. Basic and acidic residues predominate over residues 13697-13735 (IKRDPAQKTEEISKQDDGDEKKTTTDGKPPKPEDSEATP). Positions 13747-13760 (SDSVASDASLADVS) are enriched in low complexity. The segment covering 13761–13770 (KLSDDVEEKP) has biased composition (basic and acidic residues). Positions 13784-13793 (SVISETSSVD) are enriched in polar residues. Basic and acidic residues-rich tracts occupy residues 13795–13808 (IKPE…EKAE) and 13824–13843 (SEPK…DMMT). The Ig-like 13 domain maps to 13963–14036 (PVDFVKYLPR…RAKYEDSGKY (74 aa)). Fibronectin type-III domains lie at 14153–14247 (APGD…TGSP), 14253–14348 (VEFP…TVEG), and 14350–14448 (VPEI…VLAD). Ig-like domains follow at residues 14451–14542 (PRVL…VGIS), 14550–14634 (SSFS…VIVN), and 14638–14727 (PHIL…LVFE). Cys-14568 and Cys-14618 are disulfide-bonded. 2 consecutive Fibronectin type-III domains span residues 14826–14920 (APCD…TLES) and 14937–15027 (ILRT…LVPG). Residues 15011-15180 (VSSPSEETNP…TGKETTEKKK (170 aa)) form a disordered region. Composition is skewed to basic and acidic residues over residues 15034–15060 (KTEK…EKQV) and 15085–15117 (KVAE…ESRR). The span at 15118–15132 (GSLQASSDNESVTTT) shows a compositional bias: polar residues. Residues 15133 to 15177 (SEKRSEAELEKNSEKSAEKKSTSADLEAADKAETEKSETGKETTE) are compositionally biased toward basic and acidic residues. Ig-like domains lie at 15180-15274 (KKVV…VSIA) and 15283-15371 (PKVE…IALR). Fibronectin type-III domains follow at residues 15383–15475 (PTGP…LKKK) and 15503–15596 (QIGK…TTES). The tract at residues 15470–15503 (TTLKKKEETGKQKSEKSESDEKKSESDKVSELKQ) is disordered. Positions 15473–15503 (KKKEETGKQKSEKSESDEKKSESDKVSELKQ) are enriched in basic and acidic residues. Ig-like domains lie at 15599–15687 (PAFT…CKLT) and 15692–15786 (PEIN…IQVT). Residues 15791-15883 (APGKPAVEDQ…DESELVVVKN (93 aa)) enclose the Fibronectin type-III 10 domain. In terms of domain architecture, Protein kinase spans 15934 to 16189 (YIIHEELGKG…VQDALRHPWI (256 aa)). ATP contacts are provided by residues 15940-15948 (LGKGAYGTV) and Lys-15963. The active-site Proton acceptor is the Asp-16055. Residues 16206–16264 (KMQPKLDKSGVPARQKRNFLSLKRWSDDLLPIGRLAKRGAIFRRLTMDGVFERNIAFDT) form an autoinhibitory domain region. Ig-like domains follow at residues 16268 to 16358 (PSVK…AKLS), 16500 to 16575 (GKQL…VAKN), 16605 to 16692 (PRFR…FSVV), and 16705 to 16789 (PKFL…KDFT). 4 disulfide bridges follow: Cys-16290-Cys-16342, Cys-16508-Cys-16571, Cys-16627-Cys-16677, and Cys-16726-Cys-16778. The segment at 16805–16827 (LTPVRSRSRSRSRSPSVVGGEIQ) is disordered. 3 consecutive Ig-like domains span residues 16829 to 16918 (PPVV…AIVV), 16932 to 17025 (PTFV…LTIS), and 17037 to 17126 (PYFI…TEVS). A disordered region spans residues 17121 to 17169 (QNTEVSVTKSKEVKEKKEKKKVEKKDEGKKKPGRPGLPRPSGASKTEQV). Basic and acidic residues predominate over residues 17129–17150 (KSKEVKEKKEKKKVEKKDEGKK). The 92-residue stretch at 17154 to 17245 (RPGLPRPSGA…MTSTLKTASV (92 aa)) folds into the Fibronectin type-III 11 domain. Ig-like domains are found at residues 17249–17336 (PQFT…CQVT), 17358–17447 (PTLQ…CNVA), 17457–17548 (PSFS…VMIA), 17570–17661 (PRFT…TQVI), 17676–17765 (PKFT…QATT), 17782–17873 (PRFV…LNVS), 18008–18097 (PKFM…SEID), 18121–18213 (PNFI…LQVS), 18224–18316 (PPLF…MQLD), 18329–18417 (PRVF…LELT), and 18429–18519 (PKFN…MILS). 2 disulfides stabilise this stretch: Cys-17379–Cys-17431 and Cys-17478–Cys-17530. Cys-17697 and Cys-17754 form a disulfide bridge. An intrachain disulfide couples Cys-18143 to Cys-18195.

Belongs to the protein kinase superfamily. CAMK Ser/Thr protein kinase family. In terms of assembly, interacts (via C-terminus) with myosin. Interacts with actin. Mg(2+) is required as a cofactor. As to expression, expression is restricted to body wall, enteric and vulval muscles.

Its subcellular location is the cytoplasm. It is found in the myofibril. The protein resides in the sarcomere. It localises to the a band. The protein localises to the i band. Its subcellular location is the nucleus membrane. The enzyme catalyses L-seryl-[protein] + ATP = O-phospho-L-seryl-[protein] + ADP + H(+). It catalyses the reaction L-threonyl-[protein] + ATP = O-phospho-L-threonyl-[protein] + ADP + H(+). Serine/threonine-protein kinase. Key component in the assembly and functioning of muscles. By providing connections at the level of individual microfilaments, it contributes to the fine balance of forces between the two halves of the sarcomere. The size and extensibility of the cross-links are the main determinants of sarcomere extensibility properties of muscle. In non-muscle cells, seems to play a role in chromosome condensation and chromosome segregation during mitosis. Might link the lamina network to chromatin or nuclear actin, or both during interphase. This Caenorhabditis elegans protein is Titin homolog.